A 194-amino-acid chain; its full sequence is Probable proteasome subunit beta type-4 (194 aa).

It belongs to the peptidase T1B family. As to quaternary structure, the 26S proteasome consists of a 20S proteasome core and two 19S regulatory subunits. The 20S proteasome core is composed of 28 subunits that are arranged in four stacked rings, resulting in a barrel-shaped structure. The two end rings are each formed by seven alpha subunits, and the two central rings are each formed by seven beta subunits. The catalytic chamber with the active sites is on the inside of the barrel.

The protein localises to the cytoplasm. It is found in the nucleus. Non-catalytic component of the proteasome, a multicatalytic proteinase complex which is characterized by its ability to cleave peptides with Arg, Phe, Tyr, Leu, and Glu adjacent to the leaving group at neutral or slightly basic pH. The proteasome has an ATP-dependent proteolytic activity. In Schizosaccharomyces pombe (strain 972 / ATCC 24843) (Fission yeast), this protein is Probable proteasome subunit beta type-4.